Here is a 61-residue protein sequence, read N- to C-terminus: TICYSHTTTSRAILKDCGENSCYRKSRRHPPKMVLGRGCGCPPGDDYLEVKCCTSPDKCNY.

Cystine bridges form between cysteine 3-cysteine 22, cysteine 17-cysteine 39, cysteine 41-cysteine 52, and cysteine 53-cysteine 59.

Belongs to the three-finger toxin family. Short-chain subfamily. Acn-esterase inhibitor sub-subfamily. As to expression, expressed by the venom gland.

It is found in the secreted. Its function is as follows. Inhibits acetylcholinesterase. In Dendroaspis polylepis polylepis (Black mamba), this protein is Acetylcholinesterase toxin C.